The chain runs to 400 residues: MTFEDVAVEFSQWEWGQLNPAQKDLYREVMLENFRNLAILGLLVSKPYVICQLEEGGEPFMVEREISTGAHSDWKRRSKSKESMPSWGISKEELFQVVSVEKHIQDVLQFSKLKAACGCDGQLEMQQIKQERHLKQMSTIHKSATTLSRDYKWNGFGRSLGLRSVLVNQHSILMGEGSYKCDTEFRQTLGGNNSQRTHPEKKSCKCNECGKSFHFQSELRRHQRCHTGEKPYECSDCGRAFGHISSLIKHQRTHTGEKPYECSECGRAFSQSSSLVLHYRFHTGEKPYKCNECGRAFGHTSSLIKHQRTHTGEKPYECRECGRTFSQSSSLIVHYRFHTGEKPYKCNKCGRAFSQSSSLTQHYRFHTGEKPYKCNECGRAFAHTASLIKHQRSHAGKKTL.

A KRAB domain is found at 1–72; sequence MTFEDVAVEF…EREISTGAHS (72 aa). 7 consecutive C2H2-type zinc fingers follow at residues 204-226, 232-254, 260-282, 288-310, 316-338, 344-366, and 372-394; these read CKCN…QRCH, YECS…QRTH, YECS…YRFH, YKCN…QRTH, YECR…YRFH, YKCN…YRFH, and YKCN…QRSH.

This sequence belongs to the krueppel C2H2-type zinc-finger protein family.

It localises to the nucleus. May be involved in transcriptional regulation. The sequence is that of Zinc finger protein 514 (ZNF514) from Homo sapiens (Human).